The following is an 84-amino-acid chain: MKLTCVLVVLLLVLPFGDLITTSNTEDNKRGATPWQNSLKARGVCSTPEGSCVHNGCICQNAPCCHPSGCNWVNVCPGFLWDKN.

The signal sequence occupies residues 1–19 (MKLTCVLVVLLLVLPFGDL). A propeptide spanning residues 20–42 (ITTSNTEDNKRGATPWQNSLKAR) is cleaved from the precursor. Disulfide bonds link C45-C57, C52-C65, C59-C70, and C64-C76. The residue at position 72 (W72) is a 6'-bromotryptophan. The residue at position 77 (P77) is a 4-hydroxyproline. W81 carries the post-translational modification 6'-bromotryptophan.

This sequence belongs to the conotoxin O1 superfamily. In terms of tissue distribution, expressed by the venom duct.

The protein resides in the secreted. Functionally, mu-conotoxins block voltage-gated sodium channels. This toxin reversibly blocks voltage-gated sodium channel in cephalopods, with no alteration in the voltage dependence of sodium conductance or on the kinetics of inactivation. The protein is Mu-conotoxin-like Cal 12.2b of Californiconus californicus (California cone).